Consider the following 150-residue polypeptide: Large ribosomal subunit protein uL15 (150 aa).

The interval 18-43 (IVGRGSSSGWGKTSGKGHKGQQARSG) is disordered.

Belongs to the universal ribosomal protein uL15 family. As to quaternary structure, part of the 50S ribosomal subunit.

Binds to the 23S rRNA. In Treponema denticola (strain ATCC 35405 / DSM 14222 / CIP 103919 / JCM 8153 / KCTC 15104), this protein is Large ribosomal subunit protein uL15.